A 132-amino-acid polypeptide reads, in one-letter code: ATP synthase epsilon chain (132 aa).

It belongs to the ATPase epsilon chain family. In terms of assembly, F-type ATPases have 2 components, CF(1) - the catalytic core - and CF(0) - the membrane proton channel. CF(1) has five subunits: alpha(3), beta(3), gamma(1), delta(1), epsilon(1). CF(0) has three main subunits: a, b and c.

It is found in the cell inner membrane. In terms of biological role, produces ATP from ADP in the presence of a proton gradient across the membrane. The chain is ATP synthase epsilon chain from Anaeromyxobacter dehalogenans (strain 2CP-C).